The following is a 599-amino-acid chain: Zinc metalloproteinase dpy-31 (599 aa).

An N-terminal signal peptide occupies residues 1–22; sequence MALLKPFLSRTFSSFFATITGG. Residues 23-211 constitute a propeptide that is removed on maturation; it reads RNLIDSIEEL…IQHGRRTKRK (189 aa). The 200-residue stretch at 211-410 folds into the Peptidase M12A domain; it reads KFIRSELRRW…IRLMNVIYCS (200 aa). Asn-251 carries an N-linked (GlcNAc...) asparagine glycan. 5 disulfides stabilise this stretch: Cys-254/Cys-409, Cys-277/Cys-298, Cys-413/Cys-433, Cys-435/Cys-444, and Cys-455/Cys-483. His-306 lines the Zn(2+) pocket. Glu-307 is a catalytic residue. Residues His-310 and His-316 each contribute to the Zn(2+) site. The 41-residue stretch at 405 to 445 folds into the EGF-like domain; that stretch reads NVIYCSDSCAQKLPCQRGGYTDPRRCGRCRCPDGFTGKLCE. A CUB domain is found at 455–571; that stretch reads CGGRIELTSS…KGFQAQVRAL (117 aa). An N-linked (GlcNAc...) asparagine glycan is attached at Asn-522.

Requires Zn(2+) as cofactor.

The protein localises to the secreted. Its activity is regulated as follows. Inhibited by marimastat and tripeptide hydroxamic acids. Functionally, metalloprotease which cleaves the carboxyl terminus of procollagens to mature collagens. Probably involved in cuticular collagen maturation. In Brugia malayi (Filarial nematode worm), this protein is Zinc metalloproteinase dpy-31.